A 178-amino-acid polypeptide reads, in one-letter code: MSGGKYVDSEGHLYTVPIREQGNIYKPNNKAMADEVTEKQVYDAHTKEIDLVNRDPKHLNDDVVKIDFEDVIAEPEGTHSFDGIWKASFTTFTVTKYWFYRLLSTIFGIPMALIWGIYFAILSFLHIWAVVPCIKSFLIEIQCISRVYSIYVHTFCDPLFEAIGKIFSNIRISTQKEI.

S2 is subject to N-acetylserine. Phosphoserine is present on S2. The interval 2–94 is required for homooligomerization; it reads SGGKYVDSEG…WKASFTTFTV (93 aa). Topologically, residues 2 to 104 are cytoplasmic; sequence SGGKYVDSEG…TKYWFYRLLS (103 aa). K5 is modified (N6-acetyllysine; alternate). A Glycyl lysine isopeptide (Lys-Gly) (interchain with G-Cter in ubiquitin); alternate cross-link involves residue K5. Phosphotyrosine is present on Y6. A Phosphoserine modification is found at S9. At Y14 the chain carries Phosphotyrosine; by ABL1 and INSR. Y25 bears the Phosphotyrosine mark. Residues K26, K30, K39, K47, and K57 each participate in a glycyl lysine isopeptide (Lys-Gly) (interchain with G-Cter in ubiquitin) cross-link. The interaction with CAVIN3 stretch occupies residues 82 to 94; it reads DGIWKASFTTFTV. Residues 105–125 constitute an intramembrane region (helical); it reads TIFGIPMALIWGIYFAILSFL. At 126-178 the chain is on the cytoplasmic side; that stretch reads HIWAVVPCIKSFLIEIQCISRVYSIYVHTFCDPLFEAIGKIFSNIRISTQKEI. The tract at residues 131-142 is interacts with SPRY1, SPRY2, SPRY3 and SPRY4; sequence VPCIKSFLIEIQ. S-palmitoyl cysteine attachment occurs at residues C133, C143, and C156. Residues 149–160 form an interacts with SPRY1, SPRY2, and SPRY4 region; that stretch reads SIYVHTFCDPLF. Positions 167–178 are interacts with SPRY1, SPRY2, SPRY3 and SPRY4; it reads FSNIRISTQKEI.

The protein belongs to the caveolin family. In terms of assembly, homooligomer. Interacts (via the N-terminus) with DPP4; the interaction is direct. Forms a stable heterooligomeric complex with CAV2 that targets to lipid rafts and drives caveolae formation. Interacts with BMX, BTK, CTNNB1, CDH1, GLIPR2, JUP, NOSTRIN, SNAP25 and STX1A. Interacts with SLC7A9. Interacts with TGFBR1. Interacts with CTNNB1, CDH1 and JUP. Interacts with PACSIN2; this interaction induces membrane tubulation. Interacts with CAVIN3 (via leucine-zipper domain) in a cholesterol-sensitive manner. Interacts with EHD2 in a cholesterol-dependent manner. Interacts with CAVIN1. Forms a ternary complex with UBXN6 and VCP; mediates CAV1 targeting to lysosomes for degradation. Interacts with ABCG1; this interaction regulates ABCG1-mediated cholesterol efflux. Interacts with NEU3; this interaction enhances NEU3 sialidase activity within caveola. Interacts (via C-terminus) with SPRY1, SPRY2 (via C-terminus), SPRY3, and SPRY4. Interacts with IGFBP5; this interaction allows trafficking of IGFBP5 from the plasma membrane to the nucleus. In terms of processing, the N-terminus of both isoforms are blocked. Post-translationally, phosphorylated at Tyr-14 by ABL1 in response to oxidative stress. Ubiquitinated. Undergo monoubiquitination and multi- and/or polyubiquitination. Monoubiquitination of N-terminal lysines promotes integration in a ternary complex with UBXN6 and VCP which promotes oligomeric CAV1 targeting to lysosomes for degradation. Ubiquitinated by ZNRF1; leading to degradation and modulation of the TLR4-mediated immune response. Adipose tissue, lung, heart, skeletal muscle, stomach, small bowel, kidney, spleen and testis (at protein level).

The protein resides in the golgi apparatus membrane. The protein localises to the cell membrane. It is found in the membrane. Its subcellular location is the caveola. It localises to the membrane raft. The protein resides in the golgi apparatus. The protein localises to the trans-Golgi network. In terms of biological role, may act as a scaffolding protein within caveolar membranes. Forms a stable heterooligomeric complex with CAV2 that targets to lipid rafts and drives caveolae formation. Mediates the recruitment of CAVIN proteins (CAVIN1/2/3/4) to the caveolae. Interacts directly with G-protein alpha subunits and can functionally regulate their activity. Involved in the costimulatory signal essential for T-cell receptor (TCR)-mediated T-cell activation. Its binding to DPP4 induces T-cell proliferation and NF-kappa-B activation in a T-cell receptor/CD3-dependent manner. Recruits CTNNB1 to caveolar membranes and may regulate CTNNB1-mediated signaling through the Wnt pathway. Negatively regulates TGFB1-mediated activation of SMAD2/3 by mediating the internalization of TGFBR1 from membrane rafts leading to its subsequent degradation. Binds 20(S)-hydroxycholesterol (20(S)-OHC). In Mus musculus (Mouse), this protein is Caveolin-1 (Cav1).